A 232-amino-acid polypeptide reads, in one-letter code: UPF0758 protein BH3032 (232 aa).

In terms of domain architecture, MPN spans 107-229; the sequence is VIRTPEDVSR…FVSLKEKGHL (123 aa). Zn(2+) is bound by residues histidine 178, histidine 180, and aspartate 191. The short motif at 178 to 191 is the JAMM motif element; it reads HNHPSGDPTPSRED.

Belongs to the UPF0758 family.

This Halalkalibacterium halodurans (strain ATCC BAA-125 / DSM 18197 / FERM 7344 / JCM 9153 / C-125) (Bacillus halodurans) protein is UPF0758 protein BH3032.